The primary structure comprises 286 residues: Shikimate dehydrogenase (NADP(+)) (286 aa).

Shikimate-binding positions include 20-22 and Ser67; that span reads SLS. Catalysis depends on Lys71, which acts as the Proton acceptor. Residues Asn92 and Asp107 each coordinate shikimate. NADP(+) contacts are provided by residues 131-135 and Ala230; that span reads GGGGA. Residue Tyr232 participates in shikimate binding. Residue Gly253 coordinates NADP(+).

It belongs to the shikimate dehydrogenase family. In terms of assembly, homodimer.

The enzyme catalyses shikimate + NADP(+) = 3-dehydroshikimate + NADPH + H(+). It functions in the pathway metabolic intermediate biosynthesis; chorismate biosynthesis; chorismate from D-erythrose 4-phosphate and phosphoenolpyruvate: step 4/7. In terms of biological role, involved in the biosynthesis of the chorismate, which leads to the biosynthesis of aromatic amino acids. Catalyzes the reversible NADPH linked reduction of 3-dehydroshikimate (DHSA) to yield shikimate (SA). The protein is Shikimate dehydrogenase (NADP(+)) of Lactococcus lactis subsp. cremoris (strain MG1363).